Reading from the N-terminus, the 805-residue chain is Transcription factor SFL1 (805 aa).

A compositionally biased stretch (low complexity) spans 1 to 24 (MSHLVSSSLGTTTTATPTSRSPHT). Positions 1 to 110 (MSHLVSSSLG…NNNVSNNNST (110 aa)) are disordered. The span at 25–69 (NHSTPYNQNSITSNRSSPVPKNSVNSRIIPQTMNPPIDMKSNNIL) shows a compositional bias: polar residues. Positions 71–85 (PEKDTDTSRGDHSES) are enriched in basic and acidic residues. Residues 86–110 (KASSISSASGTTTTNNNNVSNNNST) show a composition bias toward low complexity. The DNA-binding element occupies 117–226 (FIHKLYDMLH…LKNIKRRSSK (110 aa)). 5 disordered regions span residues 273 to 336 (MQSP…NQSP), 438 to 483 (QSNF…VAPQ), 513 to 675 (REDS…PAPQ), 691 to 746 (HQKS…SENH), and 759 to 805 (VSEL…RKLE). Residues 295–310 (QQQQQQQQQQQQQQQQ) show a composition bias toward low complexity. Polar residues-rich tracts occupy residues 454-480 (HGNS…NLNV) and 533-556 (PSRN…NFNP). Positions 557–566 (QQSQSQSQVQ) are enriched in low complexity. Composition is skewed to polar residues over residues 581 to 597 (ESTY…SQIL), 604 to 614 (VNHSPLVQQQQ), and 622 to 635 (NDSS…SSLP). The span at 637 to 659 (TRPLSRQQQQQQQTLHHPSTTSS) shows a compositional bias: low complexity. Residues 716-738 (PISSTAPTTMITSTSKPTSTSGA) show a composition bias toward polar residues.

It belongs to the HSF family.

Its subcellular location is the nucleus. Its function is as follows. Transcription factor that plays a role of repressor of filamentous growth and flocculation. Antagonizes functions of SFL2 and FLO8. Plays a role in the hyphal repression induced by secreted factors like dodecanol by competitors such as Pseudomonas aeruginosa and Burkholderia cenocepacia. In Candida albicans (strain SC5314 / ATCC MYA-2876) (Yeast), this protein is Transcription factor SFL1 (SFL1).